A 33-amino-acid chain; its full sequence is uncharacterized protein (33 aa).

Positions 1–24 (MRTGTRCDLGELSHPRKTLPPRGM) are disordered.

This is an uncharacterized protein from Treponema pallidum (strain Nichols).